The primary structure comprises 420 residues: Acyl-coenzyme A amino acid N-acyltransferase 2 (420 aa).

Catalysis depends on charge relay system residues serine 235, aspartate 329, and histidine 363. The short motif at 418–420 (SKL) is the Microbody targeting signal element.

Belongs to the C/M/P thioester hydrolase family.

Its subcellular location is the peroxisome. Its function is as follows. Acyltransferase which efficiently conjugates very long-chain and long-chain fatty acids to taurine. Shows no conjugation activity in the presence of glycine. In Mus musculus (Mouse), this protein is Acyl-coenzyme A amino acid N-acyltransferase 2.